The sequence spans 327 residues: Spermidine/putrescine import ATP-binding protein PotA (327 aa).

Residues 5–235 form the ABC transporter domain; it reads IKVEAVEKHF…PKTLFVATFI (231 aa). 37–44 lines the ATP pocket; the sequence is GPSGCGKT.

The protein belongs to the ABC transporter superfamily. Spermidine/putrescine importer (TC 3.A.1.11.1) family. As to quaternary structure, the complex is composed of two ATP-binding proteins (PotA), two transmembrane proteins (PotB and PotC) and a solute-binding protein (PotD).

It localises to the cell membrane. It carries out the reaction ATP + H2O + polyamine-[polyamine-binding protein]Side 1 = ADP + phosphate + polyamineSide 2 + [polyamine-binding protein]Side 1.. Functionally, part of the ABC transporter complex PotABCD involved in spermidine/putrescine import. Responsible for energy coupling to the transport system. This chain is Spermidine/putrescine import ATP-binding protein PotA, found in Bacillus thuringiensis (strain Al Hakam).